Here is a 118-residue protein sequence, read N- to C-terminus: Late cornified envelope protein 1E (118 aa).

Positions 1 to 10 are enriched in low complexity; sequence MSCQQSQQQC. 2 disordered regions span residues 1–23 and 84–118; these read MSCQQSQQQCQPPPKCTPKCPPK and RSHRHRPQSSDCCSQPSGGSSCCGGGSGQHSGGCC. The segment covering 11 to 23 has biased composition (pro residues); sequence QPPPKCTPKCPPK. A compositionally biased stretch (low complexity) spans 92 to 103; sequence SSDCCSQPSGGS. Residues 104–118 show a composition bias toward gly residues; that stretch reads SCCGGGSGQHSGGCC.

This sequence belongs to the LCE family. As to quaternary structure, interacts with CYSRT1. In terms of tissue distribution, skin-specific. Expression was readily detected in adult trunk skin, adult arm skin, fetal skin, penal skin, vulva, esophagus and tongue. Not expressed in the cervix, rectum, lung, colon, or placenta.

Precursors of the cornified envelope of the stratum corneum. The polypeptide is Late cornified envelope protein 1E (LCE1E) (Homo sapiens (Human)).